A 318-amino-acid chain; its full sequence is V-set and immunoglobulin domain-containing protein 1 (318 aa).

An N-terminal signal peptide occupies residues 1–19 (MSFLLFITLGLSLTALSHC). The Ig-like V-type domain occupies 20–131 (VQVTIQNPII…SSGQGKILLT (112 aa)). Topologically, residues 20 to 233 (VQVTIQNPII…TGGEGGVIAA (214 aa)) are extracellular. Intrachain disulfides connect Cys-41/Cys-114 and Cys-157/Cys-207. In terms of domain architecture, Ig-like C2-type spans 136–223 (PSVPHCSIRG…GNATCELNLH (88 aa)). A helical membrane pass occupies residues 234–254 (AVIGGLLAAAIIIAIVWFLVV). Residues 255-318 (KRKQKKQLPP…ANGETEEPTA (64 aa)) are Cytoplasmic-facing. Positions 261-318 (QLPPTKEMKTGGNQYMAVSGEANEPPKENLGASEPTETIQFHDHAENAANGETEEPTA) are disordered.

Expressed in thymocytes.

Its subcellular location is the membrane. This chain is V-set and immunoglobulin domain-containing protein 1 (vsig1), found in Xenopus laevis (African clawed frog).